Reading from the N-terminus, the 96-residue chain is Early E1A 11 kDa protein (96 aa).

Disordered regions lie at residues 1-29 (MNSRMRRWAATSRLLHEDPPATPPSQDQQ) and 72-96 (LAQGEEEEEEEDGAEDIEENGEESD). Residues 75–96 (GEEEEEEEDGAEDIEENGEESD) are compositionally biased toward acidic residues.

This Murine adenovirus A serotype 1 (MAdV-1) protein is Early E1A 11 kDa protein.